The sequence spans 512 residues: Class E vacuolar protein-sorting machinery protein HSE1 (512 aa).

The VHS domain occupies 22–153; it reads ATDETLTNDN…RLVNDYSQYS (132 aa). 2 disordered regions span residues 153–180 and 200–253; these read SAETADGPAKPAKKERSRQDKKKEEDEL and SYLN…ESQT. Residues 164–180 are compositionally biased toward basic and acidic residues; the sequence is AKKERSRQDKKKEEDEL. A UIM domain is found at 175–194; that stretch reads KEEDELQRVLKLSLQEYERE. The segment covering 215 to 233 has biased composition (low complexity); that stretch reads QYQEQPRQQQQQQQVLQNQ. Polar residues predominate over residues 234–253; sequence PMHSTPTGQQSTQSPAESQT. An SH3 domain is found at 255–315; the sequence is ATVSKVRALY…PLNYVTPVVT (61 aa). The interval 411-512 is disordered; that stretch reads RVTHQPSGMS…INNFPNVNNI (102 aa). Residues 429–476 are compositionally biased toward polar residues; that stretch reads ASPTHSSFSQANPSMLHQQPTSSGFGNARGNSSNEYFHSQQVPPTSFN. Over residues 502-512 the composition is skewed to low complexity; the sequence is NINNFPNVNNI.

The protein belongs to the STAM family. Component of the ESCRT-0 complex composed of HSE1 and VPS27.

Its subcellular location is the endosome membrane. Its function is as follows. Component of the ESCRT-0 complex which is the sorting receptor for ubiquitinated cargo proteins at the multivesicular body (MVB). The sequence is that of Class E vacuolar protein-sorting machinery protein HSE1 (HSE1) from Debaryomyces hansenii (strain ATCC 36239 / CBS 767 / BCRC 21394 / JCM 1990 / NBRC 0083 / IGC 2968) (Yeast).